Consider the following 199-residue polypeptide: Glycerol-3-phosphate acyltransferase (199 aa).

A run of 5 helical transmembrane segments spans residues Ala-5–Val-25, Lys-51–Ala-71, Val-79–Tyr-99, Val-112–Ile-132, and Cys-153–Ile-173.

It belongs to the PlsY family. Probably interacts with PlsX.

Its subcellular location is the cell inner membrane. It carries out the reaction an acyl phosphate + sn-glycerol 3-phosphate = a 1-acyl-sn-glycero-3-phosphate + phosphate. The protein operates within lipid metabolism; phospholipid metabolism. Catalyzes the transfer of an acyl group from acyl-phosphate (acyl-PO(4)) to glycerol-3-phosphate (G3P) to form lysophosphatidic acid (LPA). This enzyme utilizes acyl-phosphate as fatty acyl donor, but not acyl-CoA or acyl-ACP. The sequence is that of Glycerol-3-phosphate acyltransferase from Solidesulfovibrio magneticus (strain ATCC 700980 / DSM 13731 / RS-1) (Desulfovibrio magneticus).